Reading from the N-terminus, the 534-residue chain is UDP-glucuronosyltransferase 1A4 (534 aa).

The first 28 residues, 1 to 28 (MARGLQVPLPRLATGLLLLLSVQPWAES), serve as a signal peptide directing secretion. Residues Asn119, Asn142, Asn296, and Asn348 are each glycosylated (N-linked (GlcNAc...) asparagine). Residues 492–508 (VIGFLLAVVLTVAFITF) traverse the membrane as a helical segment.

This sequence belongs to the UDP-glycosyltransferase family. As to quaternary structure, homodimer. Homooligomer. Interacts with UGT1A1, UGT1A3, UGT1A6, UGT1A7, UGT1A8, UGT1A9 and UGT1A10 to form heterodimers. Isoform 1 interacts with isoform 2/i2 suggesting that oligomerization is involved in negative regulation of transferase activity by isoform 2. Isoform 1 also interacts with respective i2 isoforms of UGT1A1, UGT1A3, UGT1A6, UGT1A7, UGT1A8, UGT1A9 and UGT1A10. As to expression, expressed in liver. Expressed in kidney, colon and small intestine. Not expressed in esophagus. Not expressed in skin. In terms of tissue distribution, expressed in liver, kidney, colon, esophagus and small intestine.

The protein localises to the endoplasmic reticulum membrane. The catalysed reaction is glucuronate acceptor + UDP-alpha-D-glucuronate = acceptor beta-D-glucuronoside + UDP + H(+). It catalyses the reaction calcidiol + UDP-alpha-D-glucuronate = calcidiol 25-O-(beta-D-glucuronide) + UDP + H(+). The enzyme catalyses calcidiol + UDP-alpha-D-glucuronate = calcidiol 3-O-(beta-D-glucuronide) + UDP + H(+). It carries out the reaction calcitriol + UDP-alpha-D-glucuronate = calcitriol 25-O-(beta-D-glucuronide) + UDP + H(+). The catalysed reaction is (5Z,8Z,11Z,14Z)-eicosatetraenoate + UDP-alpha-D-glucuronate = O-[(5Z),(8Z),(11Z),(14Z)-eicosatetraenoyl]-beta-D-glucuronate + UDP. It catalyses the reaction 15-hydroxy-(5Z,8Z,11Z,13E)-eicosatetraenoate + UDP-alpha-D-glucuronate = 15-O-(beta-D-glucuronosyl)-(5Z,8Z,11Z,14Z)-eicosatetraenoate + UDP + H(+). The enzyme catalyses 20-hydroxy-(5Z,8Z,11Z,14Z)-eicosatetraenoate + UDP-alpha-D-glucuronate = 20-O-(beta-D-glucuronosyl)-(5Z,8Z,11Z,14Z)-eicosatetraenoate + UDP + H(+). UDP-glucuronosyltransferase (UGT) that catalyzes phase II biotransformation reactions in which lipophilic substrates are conjugated with glucuronic acid to increase the metabolite's water solubility, thereby facilitating excretion into either the urine or bile. Essential for the elimination and detoxification of drugs, xenobiotics and endogenous compounds. Involved in the glucuronidation of calcidiol, which is the major circulating form of vitamin D3 essential for the regulation of calcium and phosphate homeostasis. Also glucuronidates the biologically active form of vitamin D3, calcitriol, probably leading to its biliary transport and intestinal reabsorption. Involved in the glucuronidation of arachidonic acid (AA) and AA-derived eicosanoids including 15-HETE, 20-HETE and PGB1. Functionally, lacks UDP-glucuronosyltransferase (UGT) activity but acts as a negative regulator of isoform 1. In Homo sapiens (Human), this protein is UDP-glucuronosyltransferase 1A4.